We begin with the raw amino-acid sequence, 283 residues long: Bifunctional protein FolD (283 aa).

NADP(+)-binding positions include 166-168 and I232; that span reads GAS.

It belongs to the tetrahydrofolate dehydrogenase/cyclohydrolase family. In terms of assembly, homodimer.

The enzyme catalyses (6R)-5,10-methylene-5,6,7,8-tetrahydrofolate + NADP(+) = (6R)-5,10-methenyltetrahydrofolate + NADPH. The catalysed reaction is (6R)-5,10-methenyltetrahydrofolate + H2O = (6R)-10-formyltetrahydrofolate + H(+). Its pathway is one-carbon metabolism; tetrahydrofolate interconversion. In terms of biological role, catalyzes the oxidation of 5,10-methylenetetrahydrofolate to 5,10-methenyltetrahydrofolate and then the hydrolysis of 5,10-methenyltetrahydrofolate to 10-formyltetrahydrofolate. In Hamiltonella defensa subsp. Acyrthosiphon pisum (strain 5AT), this protein is Bifunctional protein FolD.